The chain runs to 86 residues: Small ribosomal subunit protein uS17 (86 aa).

The protein belongs to the universal ribosomal protein uS17 family. In terms of assembly, part of the 30S ribosomal subunit.

Functionally, one of the primary rRNA binding proteins, it binds specifically to the 5'-end of 16S ribosomal RNA. This is Small ribosomal subunit protein uS17 from Lactococcus lactis subsp. cremoris (strain SK11).